The sequence spans 134 residues: Profilin-2 (134 aa).

Cysteine 13 and cysteine 118 are disulfide-bonded. Residues 84 to 100 (AVIRGKKGSGGITIKKT) carry the Involved in PIP2 interaction motif. The residue at position 114 (threonine 114) is a Phosphothreonine.

Belongs to the profilin family. As to quaternary structure, occurs in many kinds of cells as a complex with monomeric actin in a 1:1 ratio. Phosphorylated by MAP kinases.

The protein localises to the cytoplasm. It is found in the cytoskeleton. In terms of biological role, binds to actin and affects the structure of the cytoskeleton. At high concentrations, profilin prevents the polymerization of actin, whereas it enhances it at low concentrations. This is Profilin-2 from Olea europaea (Common olive).